A 230-amino-acid chain; its full sequence is Ribonuclease 3 (230 aa).

The 124-residue stretch at 10–133 (DPRLQSRIGY…IIGAIYVDSN (124 aa)) folds into the RNase III domain. Residue E46 coordinates Mg(2+). The active site involves D50. Mg(2+)-binding residues include D119 and E122. E122 is a catalytic residue. The 70-residue stretch at 161–230 (DPKSRLQEYL…AAEILKLLEQ (70 aa)) folds into the DRBM domain.

This sequence belongs to the ribonuclease III family. As to quaternary structure, homodimer. Mg(2+) serves as cofactor.

It is found in the cytoplasm. The enzyme catalyses Endonucleolytic cleavage to 5'-phosphomonoester.. Its function is as follows. Digests double-stranded RNA. Involved in the processing of primary rRNA transcript to yield the immediate precursors to the large and small rRNAs (23S and 16S). Processes some mRNAs, and tRNAs when they are encoded in the rRNA operon. Processes pre-crRNA and tracrRNA of type II CRISPR loci if present in the organism. The chain is Ribonuclease 3 from Acinetobacter baylyi (strain ATCC 33305 / BD413 / ADP1).